The following is a 104-amino-acid chain: Pole-localizer protein TmaR (104 aa).

Coiled-coil stretches lie at residues 13–43 and 76–96; these read RKNK…NLLD and SAEI…LTEE.

This sequence belongs to the pole-localizer TmaR family.

The protein resides in the cytoplasm. In terms of biological role, pole-localizer protein involved in the regulation of several cellular processes. In Vibrio vulnificus (strain CMCP6), this protein is Pole-localizer protein TmaR.